Consider the following 236-residue polypeptide: Methylosome subunit pICln (236 aa).

N-acetylserine is present on Ser2. Ser95, Ser143, Ser192, Ser194, Ser197, and Ser209 each carry phosphoserine. The interval 134–158 (LHPDPEDEDSDDYDGEEYDVEAHEQ) is disordered. Residues 138-152 (PEDEDSDDYDGEEYD) are compositionally biased toward acidic residues. The residue at position 222 (Thr222) is a Phosphothreonine.

Belongs to the pICln (TC 1.A.47) family. In terms of assembly, component of the methylosome, a 20S complex containing at least PRMT5/SKB1, WDR77/MEP50 and CLNS1A/pICln. May mediate SNRPD1 and SNRPD3 methylation. Forms a 6S pICln-Sm complex composed of CLNS1A/pICln, SNRPD1, SNRPD2, SNRPE, SNRPF and SNRPG; ring-like structure where CLNS1A/pICln mimics additional Sm proteins and which is unable to assemble into the core snRNP. Interacts with LSM10 and LSM11. As to expression, expressed in most tissues.

It is found in the cytoplasm. The protein localises to the cytosol. The protein resides in the nucleus. It localises to the cytoskeleton. Involved in both the assembly of spliceosomal snRNPs and the methylation of Sm proteins. Chaperone that regulates the assembly of spliceosomal U1, U2, U4 and U5 small nuclear ribonucleoproteins (snRNPs), the building blocks of the spliceosome, and thereby plays an important role in the splicing of cellular pre-mRNAs. Most spliceosomal snRNPs contain a common set of Sm proteins SNRPB, SNRPD1, SNRPD2, SNRPD3, SNRPE, SNRPF and SNRPG that assemble in a heptameric protein ring on the Sm site of the small nuclear RNA to form the core snRNP (Sm core). In the cytosol, the Sm proteins SNRPD1, SNRPD2, SNRPE, SNRPF and SNRPG are trapped in an inactive 6S pICln-Sm complex by the chaperone CLNS1A that controls the assembly of the core snRNP. Dissociation by the SMN complex of CLNS1A from the trapped Sm proteins and their transfer to an SMN-Sm complex triggers the assembly of core snRNPs and their transport to the nucleus. The chain is Methylosome subunit pICln (Clns1a) from Rattus norvegicus (Rat).